The primary structure comprises 430 residues: Glial fibrillary acidic protein (430 aa).

Residues 1–31 (MERRRITSARRSYASSETMVRGHGPTRHLGT) are disordered. The tract at residues 1–70 (MERRRITSAR…KETRASERAE (70 aa)) is head. Residue T7 is modified to Phosphothreonine; by AURKB and ROCK1. The segment covering 9 to 18 (ARRSYASSET) has biased composition (polar residues). R11 is subject to Omega-N-methylarginine. Phosphoserine is present on S12. Residue R21 is modified to Omega-N-methylarginine. A Citrulline modification is found at R34. At S36 the chain carries Phosphoserine; by AURKB and ROCK1. T41 carries the phosphothreonine modification. The IF rod domain occupies 67-375 (ERAEMMELND…KLLEGEENRI (309 aa)). A coil 1A region spans residues 71-102 (MMELNDRFASYIEKVRFLEQQNKALAAELNQL). S80 carries the post-translational modification Phosphoserine. A linker 1 region spans residues 103 to 113 (RAKEPTKLADV). 2 positions are modified to phosphothreonine: T108 and T148. Residues 114 to 212 (YQAELRELRL…EEEVRELQEQ (99 aa)) form a coil 1B region. Residues 213–228 (LAQQQVHVEMDVAKPD) form a linker 12 region. The tract at residues 229–250 (LTAALREIRTQYEAVATSNMQE) is coil 2A. Positions 251–254 (TEEW) are linker 2. Residues 255–375 (YRSKFADLTD…KLLEGEENRI (121 aa)) are coil 2B. S267 is subject to Phosphoserine. R268 carries the citrulline modification. Position 321 is a phosphoserine (S321). The tail stretch occupies residues 376 to 430 (TIPVQTFSNLQIRETSLDTKSVSEGHLKRNIVVKTVEMRDGEVIKESKQEHKDVM). The residue at position 381 (T381) is a Phosphothreonine. A Phosphoserine modification is found at S383. Residues R404 and R414 each carry the citrulline modification.

Belongs to the intermediate filament family. In terms of assembly, interacts with SYNM. Interacts with PSEN1 (via N-terminus). Phosphorylated by PKN1. Expressed in the cortex and hippocampus. Expression decreases following acute and chronic corticosterone treatment.

It localises to the cytoplasm. In terms of biological role, GFAP, a class-III intermediate filament, is a cell-specific marker that, during the development of the central nervous system, distinguishes astrocytes from other glial cells. The polypeptide is Glial fibrillary acidic protein (Gfap) (Rattus norvegicus (Rat)).